Reading from the N-terminus, the 91-residue chain is Putative regulatory protein Cphy_2880 (91 aa).

This sequence belongs to the RemA family.

In Lachnoclostridium phytofermentans (strain ATCC 700394 / DSM 18823 / ISDg) (Clostridium phytofermentans), this protein is Putative regulatory protein Cphy_2880.